A 1558-amino-acid chain; its full sequence is ABC transporter NFT1 (1558 aa).

At 1–29 (MIKNGTCPFWERDDLSECARREYIEFKFP) the chain is on the extracellular side. An N-linked (GlcNAc...) asparagine glycan is attached at N4. The helical transmembrane segment at 30-50 (LFILLTGMIYAFCKVFRAFYL) threads the bilayer. Over 51 to 103 (RRKNHTNEAPEFEEQGNGNHEYARFSVLRLKSAWESRSFCNVNNRSTFDKFKK) the chain is Cytoplasmic. A helical membrane pass occupies residues 104–124 (FIEGAFIVLQLTIHLYILSNM). Residues 125–130 (PMDNKK) are Extracellular-facing. The helical transmembrane segment at 131-151 (FFHQGFLVQMFLWILLLVVIT) threads the bilayer. Topologically, residues 152-169 (LRLISASQSFRWVLACKR) are cytoplasmic. The helical transmembrane segment at 170–190 (DLWAVSFYSYASLFTLSILPL) threads the bilayer. Residues 191 to 201 (RSVFIGKIKDK) lie on the Extracellular side of the membrane. The chain crosses the membrane as a helical span at residues 202–222 (IMVKYIISETFIDLALLLLLS). Residues 223-302 (TSSIEGTRYS…SSKKGRLLPN (80 aa)) are Cytoplasmic-facing. A helical transmembrane segment spans residues 303 to 323 (IICYFKAVFISQLFLAFVSSF). The ABC transmembrane type-1 1 domain occupies 311–621 (FISQLFLAFV…IASTVSLLIQ (311 aa)). Over 324-351 (LNFVPSLLMPRILSYVNDPKSQSWNLVS) the chain is Extracellular. A helical membrane pass occupies residues 352 to 374 (LYVSSMLVSKIIATTCRGQGLFL). Over 375–449 (GEKGTMQLRT…VMSIDAFKVS (75 aa)) the chain is Cytoplasmic. Residues 410 to 434 (NASTSFEENPDSSEAEPRKKSSRKD) are disordered. Residues 424–434 (AEPRKKSSRKD) show a composition bias toward basic and acidic residues. The chain crosses the membrane as a helical span at residues 450 to 470 (EAMNTFYLACEAVFMTVTALM). The Extracellular portion of the chain corresponds to 471-481 (ILYSLLGWSAF). The helical transmembrane segment at 482–504 (AGTFALLAMIPLNFWCATFYGNY) threads the bilayer. Over 505 to 558 (QADQLILTDKRTSGISEALNSIRVIKLLAWENLFYQKIINVRDGEIRLLKKKAT) the chain is Cytoplasmic. Residues 559–579 (IFFLNHLIWFFGPTLVSAITF) form a helical membrane-spanning segment. Residues 580–584 (SVFIK) lie on the Extracellular side of the membrane. Residues 585-605 (FQNQTLTPTIAFTALSLFAIL) traverse the membrane as a helical segment. Residues 606-953 (RTPMDQIAST…KFSAYKWLAD (348 aa)) are Cytoplasmic-facing. The region spanning 651-892 (FGFEDASMEW…NEFLRESINN (242 aa)) is the ABC transporter 1 domain. 686–693 (GPTGSGKS) contributes to the ATP binding site. Positions 892–901 (NDSKNTTHNQ) are enriched in polar residues. The disordered stretch occupies residues 892–926 (NDSKNTTHNQIDLKRSTTSKKTKNGDPEGENSQDE). The helical transmembrane segment at 954–974 (YFGGLGVVFVFTSSAILIHGI) threads the bilayer. In terms of domain architecture, ABC transmembrane type-1 2 spans 961 to 1251 (VFVFTSSAIL…IIKVFSSVEL (291 aa)). Residues 975 to 1013 (TLSQGFWLRYWLETGSSGSKSTWLYRIVEGHSNIYFILT) are Extracellular-facing. The helical transmembrane segment at 1014–1034 (YIVIGFVSSFLTSGKVWIAII) threads the bilayer. Over 1035–1082 (SGTNVTKKIFAKLLSSILYAKLRFHNVTPTGRIMNRFSKDMDIIDQQL) the chain is Cytoplasmic. Residues 1083–1105 (IPNFEGLSYSVVVCLWIILLIGY) traverse the membrane as a helical segment. At 1106–1109 (VTPQ) the chain is on the extracellular side. The chain crosses the membrane as a helical span at residues 1110-1132 (FLLFAIPLCALYYTVCTLYLRAS). Over 1133 to 1199 (RELKRIDNIN…ATEWITYRVD (67 aa)) the chain is Cytoplasmic. Residues 1200 to 1220 (IIGTLVLFSSSVMIIMKASYL) form a helical membrane-spanning segment. The Extracellular segment spans residues 1221–1222 (DA). A helical membrane pass occupies residues 1223 to 1243 (GLAGILLSNAFSFTETAQWII). The Cytoplasmic portion of the chain corresponds to 1244 to 1558 (KVFSSVELLM…LAKVSFDNKR (315 aa)). The region spanning 1285–1538 (VELKNLSLRY…RNTIFYRLCR (254 aa)) is the ABC transporter 2 domain. 1319–1326 (GRTGAGKS) contributes to the ATP binding site.

The protein belongs to the ABC transporter superfamily. ABCC family. Conjugate transporter (TC 3.A.1.208) subfamily.

The protein localises to the membrane. This is ABC transporter NFT1 (NFT1) from Saccharomyces cerevisiae (strain YJM789) (Baker's yeast).